Consider the following 250-residue polypeptide: MQKKSIIIPALDLIDGNVVRLHQGDYAKQTTYSDNPIEQFANYLAQGAEQLHLVDLTGAKYPAKRQTALIGKIIAETNCQIQVGGGIRTEQDVADLLAVGANRVVIGSTAVKDRAMVKGWFEKYGAEKFVLALDVNIDASGQKIIAISGWQEASGVSLEELIEDYQVVGLQHVLCTDISRDGTLAGSNVNLYREICAKYPKIHFQSSGGIGSLDDIKALKGTGVSGVIVGRALLEGKFNVAEAIECWQNG.

The Proton acceptor role is filled by Asp-12. The active-site Proton donor is the Asp-134.

Belongs to the HisA/HisF family.

The protein localises to the cytoplasm. The catalysed reaction is 1-(5-phospho-beta-D-ribosyl)-5-[(5-phospho-beta-D-ribosylamino)methylideneamino]imidazole-4-carboxamide = 5-[(5-phospho-1-deoxy-D-ribulos-1-ylimino)methylamino]-1-(5-phospho-beta-D-ribosyl)imidazole-4-carboxamide. Its pathway is amino-acid biosynthesis; L-histidine biosynthesis; L-histidine from 5-phospho-alpha-D-ribose 1-diphosphate: step 4/9. The chain is 1-(5-phosphoribosyl)-5-[(5-phosphoribosylamino)methylideneamino] imidazole-4-carboxamide isomerase from Actinobacillus pleuropneumoniae serotype 5b (strain L20).